We begin with the raw amino-acid sequence, 267 residues long: Undecaprenyl-diphosphatase (267 aa).

A run of 8 helical transmembrane segments spans residues 1–21 (MSYFEAFILALIQGLTEFLPI), 39–59 (QGLAFDVAVHVGTLMAVVIYF), 83–103 (AKLAWMIVIATIPACVFGLLM), 111–131 (LRSAYVIATTTIVFGLLLWWV), 144–164 (TGWKKAVFIGIAQALAMIPGT), 189–209 (FLMSIPIITLAGSYLGMKLVT), 218–238 (FLLTGILTSFISAYICIHFFL), and 245–265 (GMTPFVIYRLILGVGLFAFLL).

The protein belongs to the UppP family.

The protein localises to the cell inner membrane. It catalyses the reaction di-trans,octa-cis-undecaprenyl diphosphate + H2O = di-trans,octa-cis-undecaprenyl phosphate + phosphate + H(+). Functionally, catalyzes the dephosphorylation of undecaprenyl diphosphate (UPP). Confers resistance to bacitracin. This is Undecaprenyl-diphosphatase from Vibrio parahaemolyticus serotype O3:K6 (strain RIMD 2210633).